Reading from the N-terminus, the 879-residue chain is Leucine--tRNA ligase (879 aa).

Residues 46-56 (PYPSGALHMGH) carry the 'HIGH' region motif. Residues 638–642 (KMSKS) carry the 'KMSKS' region motif. Position 641 (Lys641) interacts with ATP.

The protein belongs to the class-I aminoacyl-tRNA synthetase family.

The protein resides in the cytoplasm. It catalyses the reaction tRNA(Leu) + L-leucine + ATP = L-leucyl-tRNA(Leu) + AMP + diphosphate. This is Leucine--tRNA ligase from Xanthomonas campestris pv. campestris (strain 8004).